Reading from the N-terminus, the 359-residue chain is Histidinol-phosphate aminotransferase (359 aa).

K217 is modified (N6-(pyridoxal phosphate)lysine).

Belongs to the class-II pyridoxal-phosphate-dependent aminotransferase family. Histidinol-phosphate aminotransferase subfamily. In terms of assembly, homodimer. The cofactor is pyridoxal 5'-phosphate.

The enzyme catalyses L-histidinol phosphate + 2-oxoglutarate = 3-(imidazol-4-yl)-2-oxopropyl phosphate + L-glutamate. It participates in amino-acid biosynthesis; L-histidine biosynthesis; L-histidine from 5-phospho-alpha-D-ribose 1-diphosphate: step 7/9. This Salmonella choleraesuis (strain SC-B67) protein is Histidinol-phosphate aminotransferase.